The primary structure comprises 210 residues: Troponin I, cardiac muscle (210 aa).

The disordered stretch occupies residues 1 to 43; that stretch reads MADGSSDAAREPRPAPAPIRRRSSNYRAYATEPHAKKKSKISA. At Ala2 the chain carries N-acetylalanine. 2 positions are modified to phosphoserine: Ser5 and Ser6. A phosphoserine; by PKA and PKD/PRKD1 mark is found at Ser23 and Ser24. Tyr26 bears the Phosphotyrosine mark. Thr31 is subject to Phosphothreonine; by STK4/MST1. An involved in binding TNC region spans residues 32–79; sequence EPHAKKKSKISASRKLQLKTLLLQIAKQELEREAEERRGEKGRALSTR. A phosphoserine; by PKC/PRKCE mark is found at Ser42 and Ser44. Thr51 is subject to Phosphothreonine; by STK4/MST1. Position 77 is a phosphoserine (Ser77). Thr78 carries the phosphothreonine modification. 2 positions are modified to phosphothreonine; by STK4/MST1: Thr129 and Thr143. The involved in binding TNC and actin stretch occupies residues 129 to 149; that stretch reads TQKIFDLRGKFKRPTLRRVRI. Ser150 carries the phosphoserine; by PAK3 modification. Ser166 bears the Phosphoserine mark. Thr181 is modified (phosphothreonine). Ser199 carries the phosphoserine modification.

Belongs to the troponin I family. In terms of assembly, binds to actin and tropomyosin. Interacts with TRIM63. Interacts with STK4/MST1. Phosphorylated at Ser-42 and Ser-44 by PRKCE; phosphorylation increases myocardium contractile dysfunction. Phosphorylated at Ser-23 and Ser-24 by PRKD1; phosphorylation reduces myofilament calcium sensitivity. Phosphorylated preferentially at Thr-31. Phosphorylation by STK4/MST1 alters its binding affinity to TNNC1 (cardiac Tn-C) and TNNT2 (cardiac Tn-T).

In terms of biological role, troponin I is the inhibitory subunit of troponin, the thin filament regulatory complex which confers calcium-sensitivity to striated muscle actomyosin ATPase activity. This chain is Troponin I, cardiac muscle (TNNI3), found in Homo sapiens (Human).